We begin with the raw amino-acid sequence, 346 residues long: Heat-inducible transcription repressor HrcA (346 aa).

The protein belongs to the HrcA family.

In terms of biological role, negative regulator of class I heat shock genes (grpE-dnaK-dnaJ and groELS operons). Prevents heat-shock induction of these operons. In Kineococcus radiotolerans (strain ATCC BAA-149 / DSM 14245 / SRS30216), this protein is Heat-inducible transcription repressor HrcA.